The chain runs to 466 residues: Ribulose bisphosphate carboxylase large chain (466 aa).

Position 5 is an N6,N6,N6-trimethyllysine (Lys5). Positions 114 and 164 each coordinate substrate. The active-site Proton acceptor is the Lys166. Lys168 provides a ligand contact to substrate. Mg(2+)-binding residues include Lys192, Asp194, and Glu195. Position 192 is an N6-carboxylysine (Lys192). Residue His285 is the Proton acceptor of the active site. Residues Arg286, His318, and Ser370 each contribute to the substrate site.

The protein belongs to the RuBisCO large chain family. Type I subfamily. As to quaternary structure, heterohexadecamer of 8 large chains and 8 small chains; disulfide-linked. The disulfide link is formed within the large subunit homodimers. It depends on Mg(2+) as a cofactor. In terms of processing, the disulfide bond which can form in the large chain dimeric partners within the hexadecamer appears to be associated with oxidative stress and protein turnover.

It is found in the plastid. The protein localises to the chloroplast. The enzyme catalyses 2 (2R)-3-phosphoglycerate + 2 H(+) = D-ribulose 1,5-bisphosphate + CO2 + H2O. The catalysed reaction is D-ribulose 1,5-bisphosphate + O2 = 2-phosphoglycolate + (2R)-3-phosphoglycerate + 2 H(+). RuBisCO catalyzes two reactions: the carboxylation of D-ribulose 1,5-bisphosphate, the primary event in carbon dioxide fixation, as well as the oxidative fragmentation of the pentose substrate in the photorespiration process. Both reactions occur simultaneously and in competition at the same active site. This chain is Ribulose bisphosphate carboxylase large chain, found in Coriaria myrtifolia (Tanner's sumac).